The sequence spans 746 residues: Alpha-galactosidase 2 (746 aa).

Positions 1 to 26 (MLGAPSPRRLADVLAVTAGLVASVRA) are cleaved as a signal peptide. 8 N-linked (GlcNAc...) asparagine glycosylation sites follow: N43, N156, N180, N188, N360, N427, N446, and N495. D504 (nucleophile) is an active-site residue. D566 functions as the Proton donor in the catalytic mechanism. An N-linked (GlcNAc...) asparagine glycan is attached at N714.

Belongs to the glycosyl hydrolase 27 family.

The protein localises to the secreted. The enzyme catalyses Hydrolysis of terminal, non-reducing alpha-D-galactose residues in alpha-D-galactosides, including galactose oligosaccharides, galactomannans and galactolipids.. In terms of biological role, alpha-galactosidase involved in the degradation of simple oligosaccharides like melibiose, raffinose and stachyose, and of polymeric galacto(gluco)mannans. In Hypocrea jecorina (Trichoderma reesei), this protein is Alpha-galactosidase 2 (agl2).